The sequence spans 1197 residues: Pleckstrin homology domain-containing family A member 7 (1197 aa).

2 WW domains span residues Asp-8–Thr-41 and Ser-53–Thr-86. The segment at Leu-98 to Asp-148 is disordered. Residues Ser-111 to Arg-140 show a composition bias toward low complexity. Residues Pro-158–Leu-257 form the PH domain. 3 disordered regions span residues Pro-348–Pro-384, Leu-423–Ser-467, and Phe-508–Pro-577. Low complexity predominate over residues Val-528–Thr-546. Basic and acidic residues predominate over residues Thr-568 to Pro-577. A coiled-coil region spans residues Asp-678–Ser-799. Disordered regions lie at residues Ser-830–Asn-928 and His-1032–Gly-1064. Positions Arg-913–Ser-924 are enriched in basic and acidic residues. The stretch at Gln-1016 to Leu-1044 forms a coiled coil. The segment covering His-1032–Asn-1043 has biased composition (basic residues).

The protein resides in the cell junction. It is found in the adherens junction. It localises to the cytoplasm. The protein localises to the cytoskeleton. Its subcellular location is the microtubule organizing center. The protein resides in the centrosome. Its function is as follows. Required for zonula adherens biogenesis and maintenance. This Danio rerio (Zebrafish) protein is Pleckstrin homology domain-containing family A member 7 (plekha7).